Reading from the N-terminus, the 154-residue chain is Endoribonuclease YbeY (154 aa).

Positions 114, 118, and 124 each coordinate Zn(2+).

It belongs to the endoribonuclease YbeY family. It depends on Zn(2+) as a cofactor.

It localises to the cytoplasm. In terms of biological role, single strand-specific metallo-endoribonuclease involved in late-stage 70S ribosome quality control and in maturation of the 3' terminus of the 16S rRNA. The sequence is that of Endoribonuclease YbeY from Marinomonas sp. (strain MWYL1).